The following is a 151-amino-acid chain: Small ribosomal subunit protein uS15 (151 aa).

Ser32 is modified (phosphoserine). Residues Lys39 and Lys43 each participate in a glycyl lysine isopeptide (Lys-Gly) (interchain with G-Cter in ubiquitin) cross-link.

This sequence belongs to the universal ribosomal protein uS15 family. Component of the small ribosomal subunit (SSU). Mature yeast ribosomes consist of a small (40S) and a large (60S) subunit. The 40S small subunit contains 1 molecule of ribosomal RNA (18S rRNA) and 33 different proteins (encoded by 57 genes). The large 60S subunit contains 3 rRNA molecules (25S, 5.8S and 5S rRNA) and 46 different proteins (encoded by 81 genes).

Its subcellular location is the cytoplasm. Functionally, component of the ribosome, a large ribonucleoprotein complex responsible for the synthesis of proteins in the cell. The small ribosomal subunit (SSU) binds messenger RNAs (mRNAs) and translates the encoded message by selecting cognate aminoacyl-transfer RNA (tRNA) molecules. The large subunit (LSU) contains the ribosomal catalytic site termed the peptidyl transferase center (PTC), which catalyzes the formation of peptide bonds, thereby polymerizing the amino acids delivered by tRNAs into a polypeptide chain. The nascent polypeptides leave the ribosome through a tunnel in the LSU and interact with protein factors that function in enzymatic processing, targeting, and the membrane insertion of nascent chains at the exit of the ribosomal tunnel. This chain is Small ribosomal subunit protein uS15, found in Saccharomyces cerevisiae (strain ATCC 204508 / S288c) (Baker's yeast).